Reading from the N-terminus, the 149-residue chain is Large ribosomal subunit protein eL19 (149 aa).

The segment covering Lys-55–Lys-69 has biased composition (basic and acidic residues). The interval Lys-55 to Lys-93 is disordered. Over residues Arg-70–Thr-88 the composition is skewed to basic residues.

The protein belongs to the eukaryotic ribosomal protein eL19 family. In terms of assembly, part of the 50S ribosomal subunit.

Functionally, binds to the 23S rRNA. In Methanococcus vannielii, this protein is Large ribosomal subunit protein eL19.